We begin with the raw amino-acid sequence, 705 residues long: Polyribonucleotide nucleotidyltransferase (705 aa).

Mg(2+)-binding residues include aspartate 485 and aspartate 491. Positions 552-611 (PRVYTMTIAPEKIRDVIGAGGKTINKIIGETGVQIDIKEDGKIYVMSSDSVGANRALKMI) constitute a KH domain. One can recognise an S1 motif domain in the interval 621-689 (GEIYLGKVTR…DQGRINLSRR (69 aa)).

It belongs to the polyribonucleotide nucleotidyltransferase family. The cofactor is Mg(2+).

It is found in the cytoplasm. The catalysed reaction is RNA(n+1) + phosphate = RNA(n) + a ribonucleoside 5'-diphosphate. Its function is as follows. Involved in mRNA degradation. Catalyzes the phosphorolysis of single-stranded polyribonucleotides processively in the 3'- to 5'-direction. This is Polyribonucleotide nucleotidyltransferase from Clostridium tetani (strain Massachusetts / E88).